A 97-amino-acid polypeptide reads, in one-letter code: Cell division topological specificity factor (97 aa).

It belongs to the MinE family.

Prevents the cell division inhibition by proteins MinC and MinD at internal division sites while permitting inhibition at polar sites. This ensures cell division at the proper site by restricting the formation of a division septum at the midpoint of the long axis of the cell. This is Cell division topological specificity factor from Rhodospirillum centenum (strain ATCC 51521 / SW).